We begin with the raw amino-acid sequence, 221 residues long: Probable septum site-determining protein MinC (221 aa).

This sequence belongs to the MinC family. In terms of assembly, interacts with MinD and FtsZ.

Functionally, cell division inhibitor that blocks the formation of polar Z ring septums. Rapidly oscillates between the poles of the cell to destabilize FtsZ filaments that have formed before they mature into polar Z rings. Prevents FtsZ polymerization. The chain is Probable septum site-determining protein MinC from Prochlorococcus marinus (strain SARG / CCMP1375 / SS120).